Reading from the N-terminus, the 712-residue chain is 1,4-alpha-glucan branching enzyme GlgB (712 aa).

The active-site Nucleophile is Asp-397. Glu-450 acts as the Proton donor in catalysis.

The protein belongs to the glycosyl hydrolase 13 family. GlgB subfamily. Monomer.

It carries out the reaction Transfers a segment of a (1-&gt;4)-alpha-D-glucan chain to a primary hydroxy group in a similar glucan chain.. The protein operates within glycan biosynthesis; glycogen biosynthesis. In terms of biological role, catalyzes the formation of the alpha-1,6-glucosidic linkages in glycogen by scission of a 1,4-alpha-linked oligosaccharide from growing alpha-1,4-glucan chains and the subsequent attachment of the oligosaccharide to the alpha-1,6 position. This is 1,4-alpha-glucan branching enzyme GlgB from Bradyrhizobium sp. (strain BTAi1 / ATCC BAA-1182).